The chain runs to 168 residues: MEGGGGERAAGVVRRLMAAKAESRKSFSEIGEEAGLTNVYVAQLLRRQAQLKPETAPALRAAVPGLTDDLVALMMEPPFRSYHPDIVHEPAIYRLNEAVMHFGESIKEIINEEFGDGIMSAIDFYCSVDKVQGADGKDRVVVTFDGKYLPYSEQRSDHMMSRLTRKTS.

Residues R94, E97, and S120 contribute to the active site.

The protein belongs to the cyanase family.

It carries out the reaction cyanate + hydrogencarbonate + 3 H(+) = NH4(+) + 2 CO2. In terms of biological role, catalyzes the reaction of cyanate with bicarbonate to produce ammonia and carbon dioxide. The chain is Cyanate hydratase from Oryza sativa subsp. indica (Rice).